Here is a 701-residue protein sequence, read N- to C-terminus: Polyribonucleotide nucleotidyltransferase (701 aa).

Mg(2+)-binding residues include aspartate 487 and aspartate 493. The KH domain occupies 554 to 613 (PTMIAMKIDTDKIRDVIGKGGATIRAICEETKASIDIEDDGSIKIFGESKEAAEAARQRV). The S1 motif domain occupies 623–691 (GKIYIGKVER…NRGRIKLSIK (69 aa)).

The protein belongs to the polyribonucleotide nucleotidyltransferase family. In terms of assembly, component of the RNA degradosome, which is a multiprotein complex involved in RNA processing and mRNA degradation. It depends on Mg(2+) as a cofactor.

It is found in the cytoplasm. It catalyses the reaction RNA(n+1) + phosphate = RNA(n) + a ribonucleoside 5'-diphosphate. Functionally, involved in mRNA degradation. Catalyzes the phosphorolysis of single-stranded polyribonucleotides processively in the 3'- to 5'-direction. In Pseudomonas syringae pv. syringae (strain B728a), this protein is Polyribonucleotide nucleotidyltransferase.